Consider the following 161-residue polypeptide: Nucleotide-binding protein SO_3815 (161 aa).

It belongs to the YajQ family.

Nucleotide-binding protein. This chain is Nucleotide-binding protein SO_3815, found in Shewanella oneidensis (strain ATCC 700550 / JCM 31522 / CIP 106686 / LMG 19005 / NCIMB 14063 / MR-1).